A 114-amino-acid polypeptide reads, in one-letter code: T cell receptor alpha variable 10 (114 aa).

A signal peptide spans 1–21 (MKKHLTTFLVILWLYFYRGNG). An Ig-like domain is found at 23–114 (NQVEQSPQSL…DSASYICVVS (92 aa)). N-linked (GlcNAc...) asparagine glycosylation is found at Asn-39 and Asn-45. A disulfide bridge connects residues Cys-44 and Cys-111.

In terms of assembly, alpha-beta TR is a heterodimer composed of an alpha and beta chain; disulfide-linked. The alpha-beta TR is associated with the transmembrane signaling CD3 coreceptor proteins to form the TR-CD3 (TcR or TCR). The assembly of alpha-beta TR heterodimers with CD3 occurs in the endoplasmic reticulum where a single alpha-beta TR heterodimer associates with one CD3D-CD3E heterodimer, one CD3G-CD3E heterodimer and one CD247 homodimer forming a stable octameric structure. CD3D-CD3E and CD3G-CD3E heterodimers preferentially associate with TR alpha and TR beta chains, respectively. The association of the CD247 homodimer is the last step of TcR assembly in the endoplasmic reticulum and is required for transport to the cell surface.

It is found in the cell membrane. Functionally, v region of the variable domain of T cell receptor (TR) alpha chain that participates in the antigen recognition. Alpha-beta T cell receptors are antigen specific receptors which are essential to the immune response and are present on the cell surface of T lymphocytes. Recognize peptide-major histocompatibility (MH) (pMH) complexes that are displayed by antigen presenting cells (APC), a prerequisite for efficient T cell adaptive immunity against pathogens. Binding of alpha-beta TR to pMH complex initiates TR-CD3 clustering on the cell surface and intracellular activation of LCK that phosphorylates the ITAM motifs of CD3G, CD3D, CD3E and CD247 enabling the recruitment of ZAP70. In turn ZAP70 phosphorylates LAT, which recruits numerous signaling molecules to form the LAT signalosome. The LAT signalosome propagates signal branching to three major signaling pathways, the calcium, the mitogen-activated protein kinase (MAPK) kinase and the nuclear factor NF-kappa-B (NF-kB) pathways, leading to the mobilization of transcription factors that are critical for gene expression and essential for T cell growth and differentiation. The T cell repertoire is generated in the thymus, by V-(D)-J rearrangement. This repertoire is then shaped by intrathymic selection events to generate a peripheral T cell pool of self-MH restricted, non-autoaggressive T cells. Post-thymic interaction of alpha-beta TR with the pMH complexes shapes TR structural and functional avidity. The protein is T cell receptor alpha variable 10 of Homo sapiens (Human).